Here is a 504-residue protein sequence, read N- to C-terminus: Aspartyl/glutamyl-tRNA(Asn/Gln) amidotransferase subunit B (504 aa).

Belongs to the GatB/GatE family. GatB subfamily. As to quaternary structure, heterotrimer of A, B and C subunits.

The enzyme catalyses L-glutamyl-tRNA(Gln) + L-glutamine + ATP + H2O = L-glutaminyl-tRNA(Gln) + L-glutamate + ADP + phosphate + H(+). It catalyses the reaction L-aspartyl-tRNA(Asn) + L-glutamine + ATP + H2O = L-asparaginyl-tRNA(Asn) + L-glutamate + ADP + phosphate + 2 H(+). Allows the formation of correctly charged Asn-tRNA(Asn) or Gln-tRNA(Gln) through the transamidation of misacylated Asp-tRNA(Asn) or Glu-tRNA(Gln) in organisms which lack either or both of asparaginyl-tRNA or glutaminyl-tRNA synthetases. The reaction takes place in the presence of glutamine and ATP through an activated phospho-Asp-tRNA(Asn) or phospho-Glu-tRNA(Gln). This Tropheryma whipplei (strain Twist) (Whipple's bacillus) protein is Aspartyl/glutamyl-tRNA(Asn/Gln) amidotransferase subunit B.